Here is a 448-residue protein sequence, read N- to C-terminus: Signal recognition particle 54 kDa protein (448 aa).

Residues 107–114 (GIQGSGKT), 189–193 (DSAGR), and 247–250 (TKLD) each bind GTP.

Belongs to the GTP-binding SRP family. SRP54 subfamily. In terms of assembly, part of the signal recognition particle protein translocation system, which is composed of SRP and FtsY. Archaeal SRP consists of a 7S RNA molecule of 300 nucleotides and two protein subunits: SRP54 and SRP19.

It localises to the cytoplasm. It carries out the reaction GTP + H2O = GDP + phosphate + H(+). Involved in targeting and insertion of nascent membrane proteins into the cytoplasmic membrane. Binds to the hydrophobic signal sequence of the ribosome-nascent chain (RNC) as it emerges from the ribosomes. The SRP-RNC complex is then targeted to the cytoplasmic membrane where it interacts with the SRP receptor FtsY. This chain is Signal recognition particle 54 kDa protein, found in Thermococcus onnurineus (strain NA1).